The primary structure comprises 397 residues: Acetate kinase (397 aa).

N7 contacts Mg(2+). Residue K14 coordinates ATP. Position 90 (R90) interacts with substrate. The Proton donor/acceptor role is filled by D147. ATP-binding positions include 207–211 (HLGNG), 282–284 (DFR), and 330–334 (GLGEN). Position 383 (E383) interacts with Mg(2+).

This sequence belongs to the acetokinase family. As to quaternary structure, homodimer. Mg(2+) serves as cofactor. Mn(2+) is required as a cofactor.

It is found in the cytoplasm. The enzyme catalyses acetate + ATP = acetyl phosphate + ADP. Its pathway is metabolic intermediate biosynthesis; acetyl-CoA biosynthesis; acetyl-CoA from acetate: step 1/2. Catalyzes the formation of acetyl phosphate from acetate and ATP. Can also catalyze the reverse reaction. In Clostridium botulinum (strain Kyoto / Type A2), this protein is Acetate kinase.